We begin with the raw amino-acid sequence, 686 residues long: Protein SDA1 homolog (686 aa).

Ser-232, Ser-234, and Ser-236 each carry phosphoserine. Residues 254–315 adopt a coiled-coil conformation; sequence KKGSKNKKKL…SCKERFEVKM (62 aa). The segment at 484–508 is disordered; sequence LEKEENTENDEDGWESASLSEEEED. A compositionally biased stretch (acidic residues) spans 490-508; the sequence is TENDEDGWESASLSEEEED. The residue at position 551 (Thr-551) is a Phosphothreonine. The segment at 563-586 is disordered; that stretch reads MKKEMDAAPGKAQKRKYLDMDSDE. Phosphoserine occurs at positions 584, 588, and 594. Residues 604-649 are disordered; the sequence is KPKSDKETRLATAMAGRTDRKEFVRKKTKINPFSSSTNKEKKKQKN.

The protein belongs to the SDA1 family.

It localises to the nucleus. It is found in the nucleolus. Its function is as follows. Required for 60S pre-ribosomal subunits export to the cytoplasm. The protein is Protein SDA1 homolog (Sdad1) of Rattus norvegicus (Rat).